The following is a 155-amino-acid chain: Ribosomal RNA large subunit methyltransferase H (155 aa).

S-adenosyl-L-methionine contacts are provided by residues Leu73, Gly104, and 123 to 128 (LSPLTL).

The protein belongs to the RNA methyltransferase RlmH family. In terms of assembly, homodimer.

The protein localises to the cytoplasm. It catalyses the reaction pseudouridine(1915) in 23S rRNA + S-adenosyl-L-methionine = N(3)-methylpseudouridine(1915) in 23S rRNA + S-adenosyl-L-homocysteine + H(+). Functionally, specifically methylates the pseudouridine at position 1915 (m3Psi1915) in 23S rRNA. This is Ribosomal RNA large subunit methyltransferase H from Pseudomonas putida (strain GB-1).